Consider the following 297-residue polypeptide: Acetyl-coenzyme A carboxylase carboxyl transferase subunit beta (297 aa).

The segment at 1 to 23 is disordered; it reads MSWIERILGRTSSSSSSSKSKVP. The CoA carboxyltransferase N-terminal domain occupies 26–295; it reads VWTKCTSCEQ…PFKTAELIVE (270 aa). Positions 30, 33, 49, and 52 each coordinate Zn(2+). The segment at 30 to 52 adopts a C4-type zinc-finger fold; it reads CTSCEQVLYSEELKRNMHVCPKC.

It belongs to the AccD/PCCB family. As to quaternary structure, acetyl-CoA carboxylase is a heterohexamer composed of biotin carboxyl carrier protein (AccB), biotin carboxylase (AccC) and two subunits each of ACCase subunit alpha (AccA) and ACCase subunit beta (AccD). Requires Zn(2+) as cofactor.

It localises to the cytoplasm. The enzyme catalyses N(6)-carboxybiotinyl-L-lysyl-[protein] + acetyl-CoA = N(6)-biotinyl-L-lysyl-[protein] + malonyl-CoA. Its pathway is lipid metabolism; malonyl-CoA biosynthesis; malonyl-CoA from acetyl-CoA: step 1/1. Its function is as follows. Component of the acetyl coenzyme A carboxylase (ACC) complex. Biotin carboxylase (BC) catalyzes the carboxylation of biotin on its carrier protein (BCCP) and then the CO(2) group is transferred by the transcarboxylase to acetyl-CoA to form malonyl-CoA. The protein is Acetyl-coenzyme A carboxylase carboxyl transferase subunit beta of Actinobacillus pleuropneumoniae serotype 5b (strain L20).